The sequence spans 433 residues: 3-phosphoshikimate 1-carboxyvinyltransferase (433 aa).

Residues Lys23, Ser24, and Arg28 each coordinate 3-phosphoshikimate. Phosphoenolpyruvate is bound at residue Lys23. Residues Gly93 and Arg121 each coordinate phosphoenolpyruvate. 4 residues coordinate 3-phosphoshikimate: Ser167, Gln169, Asp318, and Lys345. Gln169 is a binding site for phosphoenolpyruvate. Residue Asp318 is the Proton acceptor of the active site. Residues Arg349 and Arg390 each coordinate phosphoenolpyruvate.

Belongs to the EPSP synthase family. Monomer.

The protein resides in the cytoplasm. It catalyses the reaction 3-phosphoshikimate + phosphoenolpyruvate = 5-O-(1-carboxyvinyl)-3-phosphoshikimate + phosphate. It functions in the pathway metabolic intermediate biosynthesis; chorismate biosynthesis; chorismate from D-erythrose 4-phosphate and phosphoenolpyruvate: step 6/7. Catalyzes the transfer of the enolpyruvyl moiety of phosphoenolpyruvate (PEP) to the 5-hydroxyl of shikimate-3-phosphate (S3P) to produce enolpyruvyl shikimate-3-phosphate and inorganic phosphate. The protein is 3-phosphoshikimate 1-carboxyvinyltransferase of Nitratiruptor sp. (strain SB155-2).